The sequence spans 426 residues: UDP-N-acetylmuramoylalanine--D-glutamate ligase (426 aa).

112-118 (GSVGKST) serves as a coordination point for ATP.

Belongs to the MurCDEF family.

The protein resides in the cytoplasm. The enzyme catalyses UDP-N-acetyl-alpha-D-muramoyl-L-alanine + D-glutamate + ATP = UDP-N-acetyl-alpha-D-muramoyl-L-alanyl-D-glutamate + ADP + phosphate + H(+). The protein operates within cell wall biogenesis; peptidoglycan biosynthesis. Its function is as follows. Cell wall formation. Catalyzes the addition of glutamate to the nucleotide precursor UDP-N-acetylmuramoyl-L-alanine (UMA). The sequence is that of UDP-N-acetylmuramoylalanine--D-glutamate ligase from Thermosipho melanesiensis (strain DSM 12029 / CIP 104789 / BI429).